The following is a 953-amino-acid chain: Coatomer subunit beta (953 aa).

Thr2 carries the post-translational modification N-acetylthreonine. 6 HEAT repeats span residues 96 to 131 (HEMILVCDAYRKDLQHPNEFIRGSTLRFLCKLKEAE), 132 to 168 (LLEPLMPAIRACLEHRHSYVRRNAVLAIYTIYRNFEH), 240 to 276 (SERARFIRCIYNLLQSSSPAVKYEAAGTLVTLSSAPT), 277 to 314 (AIKAAAQCYIDLIIKESDNNVKLIVLDRLIELKEHPAH), 316 to 353 (RVLQDLVMDILRVLSTPDLEVRKKTLQLALDLVSSRNV), and 396 to 433 (DMAANVIPVLMEFLSDSNEAAAADVLEFVREAIQRFDN). An N6-acetyllysine modification is found at Lys494.

As to quaternary structure, oligomeric complex that consists of at least the alpha, beta, beta', gamma, delta, epsilon and zeta subunits. Interacts with ARF1 (myristoylated); this interaction is required for binding of COPB1 to Golgi membranes. Interacts with CAPN8 and PRKCE. Interacts with SCYL1. Interacts with COPG1. Interacts (via trunk domain) with ARF1 (via switch I region); the interaction is direct. Interacts with KCNK2 (via N-terminus); this interaction increases the channel-mediated whole cell currents and promotes plasma membrane expression of KCNK2. Interacts with STX17. Interacts with TMEM115. Interacts with TMEM41B. Post-translationally, proteolytically cleaved between Ser-528 and Ser-529 by CAPN8.

Its subcellular location is the cytoplasm. The protein localises to the cytosol. It is found in the golgi apparatus membrane. The protein resides in the cytoplasmic vesicle. It localises to the COPI-coated vesicle membrane. Its subcellular location is the cell membrane. The protein localises to the endoplasmic reticulum-Golgi intermediate compartment. Functionally, the coatomer is a cytosolic protein complex that binds to dilysine motifs and reversibly associates with Golgi non-clathrin-coated vesicles, which further mediate biosynthetic protein transport from the ER, via the Golgi up to the trans Golgi network. Coatomer complex is required for budding from Golgi membranes, and is essential for the retrograde Golgi-to-ER transport of dilysine-tagged proteins. In mammals, the coatomer can only be recruited by membranes associated to ADP-ribosylation factors (ARFs), which are small GTP-binding proteins; the complex also influences the Golgi structural integrity, as well as the processing, activity, and endocytic recycling of LDL receptors. Involved in the Golgi disassembly and reassembly processes during cell cycle. Plays a functional role in facilitating the transport of kappa-type opioid receptor mRNAs into axons and enhances translation of these proteins. Required for limiting lipid storage in lipid droplets. Involved in lipid homeostasis by regulating the presence of perilipin family members PLIN2 and PLIN3 at the lipid droplet surface and promoting the association of adipocyte surface triglyceride lipase (PNPLA2) with the lipid droplet to mediate lipolysis. Involved in autophagy by playing a role in early endosome function. Plays a role in organellar compartmentalization of secretory compartments including endoplasmic reticulum (ER)-Golgi intermediate compartment (ERGIC), Golgi, trans-Golgi network (TGN) and recycling endosomes, and in biosynthetic transport of CAV1. The protein is Coatomer subunit beta (COPB1) of Bos taurus (Bovine).